Here is a 286-residue protein sequence, read N- to C-terminus: Bifunctional protein FolD (286 aa).

Residues 166 to 168 and isoleucine 232 each bind NADP(+); that span reads GAS.

It belongs to the tetrahydrofolate dehydrogenase/cyclohydrolase family. In terms of assembly, homodimer.

The enzyme catalyses (6R)-5,10-methylene-5,6,7,8-tetrahydrofolate + NADP(+) = (6R)-5,10-methenyltetrahydrofolate + NADPH. It carries out the reaction (6R)-5,10-methenyltetrahydrofolate + H2O = (6R)-10-formyltetrahydrofolate + H(+). Its pathway is one-carbon metabolism; tetrahydrofolate interconversion. Its function is as follows. Catalyzes the oxidation of 5,10-methylenetetrahydrofolate to 5,10-methenyltetrahydrofolate and then the hydrolysis of 5,10-methenyltetrahydrofolate to 10-formyltetrahydrofolate. In Shewanella woodyi (strain ATCC 51908 / MS32), this protein is Bifunctional protein FolD.